A 75-amino-acid chain; its full sequence is MKASVHPDYQTVKVTCSCGEVFETRSTLCKDLNIEVCSMCHPFYTGKQKLVDTGGRVQKFRDRYNMRTGQAKSKE.

Cys16, Cys18, Cys37, and Cys40 together coordinate Zn(2+).

The protein belongs to the bacterial ribosomal protein bL31 family. Type A subfamily. Part of the 50S ribosomal subunit. Zn(2+) is required as a cofactor.

Functionally, binds the 23S rRNA. The protein is Large ribosomal subunit protein bL31 of Legionella pneumophila (strain Paris).